The sequence spans 70 residues: Conotoxin Mr3.8 (70 aa).

Residues 1–24 form the signal peptide; the sequence is MLKMGVVLFIFLVLFPLATLQLDA. Residues 25-54 constitute a propeptide that is removed on maturation; the sequence is DQPVERYAKNKQLFNPHKRRGIILRAPGKR. 3 disulfides stabilise this stretch: Cys-55–Cys-67, Cys-56–Cys-68, and Cys-61–Cys-65.

The protein belongs to the conotoxin M superfamily. Expressed by the venom duct.

The protein resides in the secreted. Functionally, in vitro, inhibits proliferation of the mice ovarian cancer cells ID8. This Conus marmoreus (Marble cone) protein is Conotoxin Mr3.8.